Reading from the N-terminus, the 361-residue chain is Histidinol-phosphate aminotransferase (361 aa).

Lys-218 bears the N6-(pyridoxal phosphate)lysine mark.

It belongs to the class-II pyridoxal-phosphate-dependent aminotransferase family. Histidinol-phosphate aminotransferase subfamily. Homodimer. Pyridoxal 5'-phosphate serves as cofactor.

It catalyses the reaction L-histidinol phosphate + 2-oxoglutarate = 3-(imidazol-4-yl)-2-oxopropyl phosphate + L-glutamate. The protein operates within amino-acid biosynthesis; L-histidine biosynthesis; L-histidine from 5-phospho-alpha-D-ribose 1-diphosphate: step 7/9. This Ruegeria pomeroyi (strain ATCC 700808 / DSM 15171 / DSS-3) (Silicibacter pomeroyi) protein is Histidinol-phosphate aminotransferase.